Consider the following 400-residue polypeptide: Phosphoglycerate kinase (400 aa).

Residues 23 to 25 (DLN), Arg-38, 61 to 64 (HFGR), Arg-120, and Arg-153 contribute to the substrate site. Residues Lys-203, Glu-325, and 355 to 358 (GGDT) contribute to the ATP site.

It belongs to the phosphoglycerate kinase family. In terms of assembly, monomer.

The protein localises to the cytoplasm. It carries out the reaction (2R)-3-phosphoglycerate + ATP = (2R)-3-phospho-glyceroyl phosphate + ADP. The protein operates within carbohydrate degradation; glycolysis; pyruvate from D-glyceraldehyde 3-phosphate: step 2/5. The polypeptide is Phosphoglycerate kinase (Rhizobium leguminosarum bv. trifolii (strain WSM2304)).